A 123-amino-acid chain; its full sequence is Urotensin-2 (123 aa).

An N-terminal signal peptide occupies residues 1-20 (MDRVPFCCLLFIGLLNPLLS). 2 consecutive propeptides follow at residues 21-104 (LPVT…LART) and 107-109 (QHK). A disordered region spans residues 57–88 (RQTMGTEAGESPGEAGPSTETPTPRGSMRKAF). Cys-117 and Cys-122 are joined by a disulfide.

The protein belongs to the urotensin-2 family. As to expression, brain specific. Predominantly expressed in motoneurons of the brainstem and spinal cord.

The protein resides in the secreted. Highly potent vasoconstrictor. In Mus musculus (Mouse), this protein is Urotensin-2 (Uts2).